Consider the following 699-residue polypeptide: tRNA wybutosine-synthesizing protein 4 (699 aa).

Residues Arg-94, Gly-120, Asp-151, 197-198 (DL), and Glu-224 contribute to the S-adenosyl-L-methionine site.

Belongs to the methyltransferase superfamily. LCMT family.

The enzyme catalyses 7-[(3S)-3-amino-3-carboxypropyl]wyosine(37) in tRNA(Phe) + S-adenosyl-L-methionine = 7-[(3S)-(3-amino-3-methoxycarbonyl)propyl]wyosine(37) in tRNA(Phe) + S-adenosyl-L-homocysteine. It carries out the reaction 7-[(3S)-(3-amino-3-methoxycarbonyl)propyl]wyosine(37) in tRNA(Phe) + S-adenosyl-L-methionine + CO2 = wybutosine(37) in tRNA(Phe) + S-adenosyl-L-homocysteine + 2 H(+). Its pathway is tRNA modification; wybutosine-tRNA(Phe) biosynthesis. Probable S-adenosyl-L-methionine-dependent methyltransferase that acts as a component of the wybutosine biosynthesis pathway. Wybutosine is a hyper modified guanosine with a tricyclic base found at the 3'-position adjacent to the anticodon of eukaryotic phenylalanine tRNA. May methylate the carboxyl group of leucine residues to form alpha-leucine ester residues. The chain is tRNA wybutosine-synthesizing protein 4 (PPM2) from Eremothecium gossypii (strain ATCC 10895 / CBS 109.51 / FGSC 9923 / NRRL Y-1056) (Yeast).